A 284-amino-acid polypeptide reads, in one-letter code: 2-dehydro-3-deoxyphosphooctonate aldolase (284 aa).

Belongs to the KdsA family.

Its subcellular location is the cytoplasm. The catalysed reaction is D-arabinose 5-phosphate + phosphoenolpyruvate + H2O = 3-deoxy-alpha-D-manno-2-octulosonate-8-phosphate + phosphate. It participates in carbohydrate biosynthesis; 3-deoxy-D-manno-octulosonate biosynthesis; 3-deoxy-D-manno-octulosonate from D-ribulose 5-phosphate: step 2/3. The protein operates within bacterial outer membrane biogenesis; lipopolysaccharide biosynthesis. The protein is 2-dehydro-3-deoxyphosphooctonate aldolase of Aliivibrio salmonicida (strain LFI1238) (Vibrio salmonicida (strain LFI1238)).